The chain runs to 366 residues: Histidinol-phosphate aminotransferase 2 (366 aa).

A compositionally biased stretch (polar residues) spans 1-11 (MQVKDQLSSLQ). The disordered stretch occupies residues 1–21 (MQVKDQLSSLQPYKPGKSPEQ). Lysine 222 is modified (N6-(pyridoxal phosphate)lysine).

The protein belongs to the class-II pyridoxal-phosphate-dependent aminotransferase family. Histidinol-phosphate aminotransferase subfamily. As to quaternary structure, homodimer. The cofactor is pyridoxal 5'-phosphate.

It catalyses the reaction L-histidinol phosphate + 2-oxoglutarate = 3-(imidazol-4-yl)-2-oxopropyl phosphate + L-glutamate. It functions in the pathway amino-acid biosynthesis; L-histidine biosynthesis; L-histidine from 5-phospho-alpha-D-ribose 1-diphosphate: step 7/9. This chain is Histidinol-phosphate aminotransferase 2, found in Bacillus cereus (strain ATCC 10987 / NRS 248).